We begin with the raw amino-acid sequence, 236 residues long: Ribose-5-phosphate isomerase A (236 aa).

Substrate contacts are provided by residues 28–31 (TGST), 83–86 (DGAD), and 96–99 (KGGG). E105 acts as the Proton acceptor in catalysis. K123 serves as a coordination point for substrate.

Belongs to the ribose 5-phosphate isomerase family. As to quaternary structure, homodimer.

It carries out the reaction aldehydo-D-ribose 5-phosphate = D-ribulose 5-phosphate. It functions in the pathway carbohydrate degradation; pentose phosphate pathway; D-ribose 5-phosphate from D-ribulose 5-phosphate (non-oxidative stage): step 1/1. Functionally, catalyzes the reversible conversion of ribose-5-phosphate to ribulose 5-phosphate. The chain is Ribose-5-phosphate isomerase A from Methylorubrum extorquens (strain CM4 / NCIMB 13688) (Methylobacterium extorquens).